Consider the following 188-residue polypeptide: GMP synthase [glutamine-hydrolyzing] subunit A (188 aa).

One can recognise a Glutamine amidotransferase type-1 domain in the interval 2-188 (KIAVIYFGGQ…FKNFIEACKK (187 aa)). Cysteine 79 serves as the catalytic Nucleophile. Active-site residues include histidine 166 and glutamate 168.

In terms of assembly, heterodimer composed of a glutamine amidotransferase subunit (A) and a GMP-binding subunit (B).

The enzyme catalyses XMP + L-glutamine + ATP + H2O = GMP + L-glutamate + AMP + diphosphate + 2 H(+). The protein operates within purine metabolism; GMP biosynthesis; GMP from XMP (L-Gln route): step 1/1. Catalyzes the synthesis of GMP from XMP. This Sulfurisphaera tokodaii (strain DSM 16993 / JCM 10545 / NBRC 100140 / 7) (Sulfolobus tokodaii) protein is GMP synthase [glutamine-hydrolyzing] subunit A.